A 148-amino-acid polypeptide reads, in one-letter code: NADPH-dependent 7-cyano-7-deazaguanine reductase (148 aa).

Cysteine 50 serves as the catalytic Thioimide intermediate. Aspartate 57 serves as the catalytic Proton donor. Substrate contacts are provided by residues 72 to 74 (VES) and 91 to 92 (HE).

The protein belongs to the GTP cyclohydrolase I family. QueF type 1 subfamily.

Its subcellular location is the cytoplasm. It carries out the reaction 7-aminomethyl-7-carbaguanine + 2 NADP(+) = 7-cyano-7-deazaguanine + 2 NADPH + 3 H(+). Its pathway is tRNA modification; tRNA-queuosine biosynthesis. Functionally, catalyzes the NADPH-dependent reduction of 7-cyano-7-deazaguanine (preQ0) to 7-aminomethyl-7-deazaguanine (preQ1). The polypeptide is NADPH-dependent 7-cyano-7-deazaguanine reductase (Helicobacter acinonychis (strain Sheeba)).